The following is a 172-amino-acid chain: uncharacterized protein (172 aa).

This sequence belongs to the flavoredoxin family. Requires FMN as cofactor.

This is an uncharacterized protein from Pyrococcus horikoshii (strain ATCC 700860 / DSM 12428 / JCM 9974 / NBRC 100139 / OT-3).